The following is a 190-amino-acid chain: Transcription factor E (190 aa).

The HTH TFE/IIEalpha-type domain maps to 4-87; it reads KNKALLEIAK…YWHLETKRLP (84 aa). The disordered stretch occupies residues 170–190; the sequence is PSPKKEKKKTRAKAKRKTRKK. Over residues 174-190 the composition is skewed to basic residues; the sequence is KEKKKTRAKAKRKTRKK.

The protein belongs to the TFE family. Monomer. Interaction with RNA polymerase subunits RpoF and RpoE is necessary for Tfe stimulatory transcription activity. Able to interact with Tbp and RNA polymerase in the absence of DNA promoter. Interacts both with the preinitiation and elongation complexes.

Functionally, transcription factor that plays a role in the activation of archaeal genes transcribed by RNA polymerase. Facilitates transcription initiation by enhancing TATA-box recognition by TATA-box-binding protein (Tbp), and transcription factor B (Tfb) and RNA polymerase recruitment. Not absolutely required for transcription in vitro, but particularly important in cases where Tbp or Tfb function is not optimal. It dynamically alters the nucleic acid-binding properties of RNA polymerases by stabilizing the initiation complex and destabilizing elongation complexes. Seems to translocate with the RNA polymerase following initiation and acts by binding to the non template strand of the transcription bubble in elongation complexes. The chain is Transcription factor E from Pyrococcus abyssi (strain GE5 / Orsay).